A 459-amino-acid chain; its full sequence is Pentatricopeptide repeat-containing protein At1g07740, mitochondrial (459 aa).

The transit peptide at 1 to 20 directs the protein to the mitochondrion; it reads MRRRLSSVLINNQCIASQRH. The disordered stretch occupies residues 19 to 41; sequence RHYHTSRPEKPTKKASSHEPTHK. Over residues 24-41 the composition is skewed to basic and acidic residues; sequence SRPEKPTKKASSHEPTHK. 10 PPR repeats span residues 80–114, 115–149, 150–184, 185–219, 220–254, 255–289, 290–324, 325–359, 360–394, and 395–429; these read DYPS…NVRC, RESL…DCVR, TIQS…RLRP, NSVS…EVQP, SVVT…RIRP, NAVT…GCKP, GLVN…RIKP, DVVI…GCKP, NAAT…RHCP, and TPAT…NLSF.

It belongs to the PPR family. P subfamily.

Its subcellular location is the mitochondrion. This is Pentatricopeptide repeat-containing protein At1g07740, mitochondrial from Arabidopsis thaliana (Mouse-ear cress).